Consider the following 419-residue polypeptide: Serine hydroxymethyltransferase (419 aa).

(6S)-5,6,7,8-tetrahydrofolate-binding positions include Leu121 and 125–127 (GHL). Position 230 is an N6-(pyridoxal phosphate)lysine (Lys230). 355–357 (SPF) is a binding site for (6S)-5,6,7,8-tetrahydrofolate.

Belongs to the SHMT family. As to quaternary structure, homodimer. Pyridoxal 5'-phosphate serves as cofactor.

The protein resides in the cytoplasm. The enzyme catalyses (6R)-5,10-methylene-5,6,7,8-tetrahydrofolate + glycine + H2O = (6S)-5,6,7,8-tetrahydrofolate + L-serine. It participates in one-carbon metabolism; tetrahydrofolate interconversion. It functions in the pathway amino-acid biosynthesis; glycine biosynthesis; glycine from L-serine: step 1/1. In terms of biological role, catalyzes the reversible interconversion of serine and glycine with tetrahydrofolate (THF) serving as the one-carbon carrier. This reaction serves as the major source of one-carbon groups required for the biosynthesis of purines, thymidylate, methionine, and other important biomolecules. Also exhibits THF-independent aldolase activity toward beta-hydroxyamino acids, producing glycine and aldehydes, via a retro-aldol mechanism. The sequence is that of Serine hydroxymethyltransferase from Streptococcus equi subsp. equi (strain 4047).